The following is a 35-amino-acid chain: Bacteriocin SRCAM 1580 (35 aa).

Belongs to the bacteriocin class IIA/YGNGV family.

The protein resides in the secreted. In terms of biological role, bacteriocin with antibacterial activity against C.jejuni. The protein is Bacteriocin SRCAM 1580 of Niallia circulans (Bacillus circulans).